Consider the following 571-residue polypeptide: Carboxylesterase 3B (571 aa).

Positions 1 to 31 (MTNMRTMIPAGSSVLVWVTCLLLAFVTTVTG) are cleaved as a signal peptide. Residues Cys100 and Cys127 are joined by a disulfide bond. The active-site Acyl-ester intermediate is Ser232. An intrachain disulfide couples Cys284 to Cys295. Asn311 carries N-linked (GlcNAc...) asparagine glycosylation. Active-site charge relay system residues include Glu347 and His460. A Prevents secretion from ER motif is present at residues 568-571 (PEEL).

Belongs to the type-B carboxylesterase/lipase family.

The protein localises to the endoplasmic reticulum lumen. The enzyme catalyses a carboxylic ester + H2O = an alcohol + a carboxylate + H(+). In terms of biological role, involved in the detoxification of xenobiotics and in the activation of ester and amide prodrugs. This chain is Carboxylesterase 3B (Ces3b), found in Mus musculus (Mouse).